The primary structure comprises 380 residues: Ribosomal RNA large subunit methyltransferase F (380 aa).

The disordered stretch occupies residues 1–32 (MSHKTKPSTQERKAGKPSAPKRKVISKSPNSK).

This sequence belongs to the methyltransferase superfamily. METTL16/RlmF family.

It is found in the cytoplasm. It carries out the reaction adenosine(1618) in 23S rRNA + S-adenosyl-L-methionine = N(6)-methyladenosine(1618) in 23S rRNA + S-adenosyl-L-homocysteine + H(+). Functionally, specifically methylates the adenine in position 1618 of 23S rRNA. The polypeptide is Ribosomal RNA large subunit methyltransferase F (Shewanella halifaxensis (strain HAW-EB4)).